The sequence spans 965 residues: Fibronectin-binding protein A (965 aa).

Residues 1 to 36 form the signal peptide; the sequence is MKNNLRYGIRKHKLGAASVFLGTMIVIGMGQDKEAA. Residues 7 to 18 carry the YSIRK-G/S signaling motif motif; the sequence is YGIRKHKLGAAS. The disordered stretch occupies residues 37–206; it reads ASEQKTTTVE…VTSKVTVEDE (170 aa). The segment at 37-514 is ligand-binding A region; the sequence is ASEQKTTTVE…SNKANGDGKY (478 aa). Positions 39–55 are enriched in polar residues; the sequence is EQKTTTVEENGNSATDN. Residues 59–74 are compositionally biased toward low complexity; that stretch reads ETQTTTTNVNTIDETQ. Residues 75 to 92 are compositionally biased toward polar residues; it reads SYSATATEQPSNATQVTT. A compositionally biased stretch (basic and acidic residues) spans 112–122; it reads TVKEEVVKEEA. The span at 126 to 139 shows a compositional bias: polar residues; the sequence is VKETTQSQDNSGDQ. The span at 179 to 193 shows a compositional bias: basic and acidic residues; that stretch reads DVAEAKEASDAKVET. The segment at 194 to 514 is fibrinogen/elastin/tropoelastin-binding; it reads GTDVTSKVTV…SNKANGDGKY (321 aa). The segment at 515 to 837 is fibronectin-binding; sequence GPIVDSNNFE…EGQQTIEEDT (323 aa). A B-1 repeat occupies 548–577; that stretch reads ENQDNTPLDIDYHTAIDGEGGYVDGYIETI. The 2 X approximate tandem repeats stretch occupies residues 548-607; it reads ENQDNTPLDIDYHTAIDGEGGYVDGYIETIEETDSSAIDIDYHTAVDSEAGHVGGYTESS. The stretch at 578-607 is one B-2 repeat; sequence EETDSSAIDIDYHTAVDSEAGHVGGYTESS. Disordered stretches follow at residues 598 to 625, 743 to 774, 794 to 903, and 916 to 942; these read GHVG…NSKH, LGYE…GNII, IEED…GKVV, and VAPT…NKGM. A D-1; truncated repeat occupies 748–770; that stretch reads GQNSGNQSFEEDTEEDKPKYEQG. The 4 X approximate tandem repeats stretch occupies residues 748–839; sequence GQNSGNQSFE…QQTIEEDTTP (92 aa). One copy of the D-2; truncated repeat lies at 771-785; the sequence is GNIIDIDFDSVPQIH. The D-3 repeat unit spans residues 786–824; it reads GFNKHNEIIEEDTNKDKPNYQFGGHNSVDFEEDTLPKVS. Residues 794 to 803 show a composition bias toward basic and acidic residues; sequence IEEDTNKDKP. One copy of the D-4; truncated repeat lies at 825–839; that stretch reads GQNEGQQTIEEDTTP. Positions 839–885 are enriched in pro residues; sequence PPTPPTPEVPSEPGTPTPPTPEVPSEPGKPTPPTPEVPAEPGKPVPP. WR repeat units follow at residues 840 to 853, 854 to 867, 868 to 881, and 882 to 895; these read PTPP…EPGT, PTPP…EPGK, and PVPP…KPSK. The 4 X tandem repeats, Pro-rich (WR) stretch occupies residues 840-895; that stretch reads PTPPTPEVPSEPGTPTPPTPEVPSEPGKPTPPTPEVPAEPGKPVPPAKEEPKKPSK. The short motif at 929–933 is the LPXTG sorting signal element; it reads LPETG. At Thr932 the chain carries Pentaglycyl murein peptidoglycan amidated threonine. Positions 933–965 are cleaved as a propeptide — removed by sortase; it reads GGEESTNKGMLFGGLFSILGLALLRRNKKNHKA.

It is found in the secreted. The protein resides in the cell wall. Promotes bacterial attachment to multiple substrates, such as fibronectin (Fn), fibrinogen (Fg), elastin peptides and tropoelastin. This confers to S.aureus the ability to invade endothelial cells. Promotes adherence to and aggregation of activated platelets. The chain is Fibronectin-binding protein A (fnbA) from Staphylococcus aureus (strain MRSA252).